Here is a 1620-residue protein sequence, read N- to C-terminus: ALK tyrosine kinase receptor (1620 aa).

Positions 1 to 18 are cleaved as a signal peptide; it reads MGAIGLLWLLPLLLSTAA. Residues 19 to 1038 are Extracellular-facing; the sequence is VGSGMGTGQR…PHLPLSLILS (1020 aa). A heparin-binding region region spans residues 48–70; that stretch reads RLQRKSLAVDFVVPSLFRVYARD. N169, N244, N285, N324, N411, N424, N445, N563, N571, and N627 each carry an N-linked (GlcNAc...) asparagine glycan. The MAM 1 domain occupies 264–427; it reads LECSFDFPCE…DFFALKNCSE (164 aa). The LDL-receptor class A domain maps to 437–473; sequence LQSSFTCWNGTVLQLGQACDFHQDCAQGEDESQMCRK. Residues 478–636 enclose the MAM 2 domain; it reads FYCNFEDGFC…NISISLDCYL (159 aa). A disordered region spans residues 650–674; it reads PKSRNLFERNPNKELKPGENSPRQT. The span at 654–666 shows a compositional bias: basic and acidic residues; the sequence is NLFERNPNKELKP. C688 and C701 are disulfide-bonded. N709 is a glycosylation site (N-linked (GlcNAc...) asparagine). An intrachain disulfide couples C783 to C794. Residues N808, N863, N864, and N886 are each glycosylated (N-linked (GlcNAc...) asparagine). Residues C906 and C928 are joined by a disulfide bond. N-linked (GlcNAc...) asparagine glycosylation occurs at N986. 3 cysteine pairs are disulfide-bonded: C987–C995, C990–C1006, and C1008–C1021. Positions 987 to 1025 are EGF-like; it reads CSHCEVDECHMDPESHKVICFCDHGTVLAEDGVSCIVSP. A helical membrane pass occupies residues 1039–1059; the sequence is VVTSALVAALVLAFSGIMIVY. Residues 1060-1620 lie on the Cytoplasmic side of the membrane; that stretch reads RRKHQELQAM…SKNSMNQPGP (561 aa). Phosphotyrosine is present on residues Y1078, Y1092, and Y1096. Positions 1116 to 1392 constitute a Protein kinase domain; that stretch reads ITLIRGLGHG…IEYCTQDPDV (277 aa). H1124 is an ATP binding site. Y1131 bears the Phosphotyrosine mark. Residues K1150 and 1197 to 1199 contribute to the ATP site; that span reads ELM. D1249 serves as the catalytic Proton acceptor. D1270 is a binding site for ATP. Y1278 bears the Phosphotyrosine mark. Residues 1408 to 1463 are disordered; that stretch reads EEKVPVRPKDPEGVPPLLVSQQAKREEERSPAAPPPLPTTSSGKAAKKPTAAEISV. Over residues 1410 to 1419 the composition is skewed to basic and acidic residues; it reads KVPVRPKDPE. Y1507 bears the Phosphotyrosine mark. Residues 1514 to 1540 are disordered; it reads KPTKKNNPIAKKEPHDRGNLGLEGSCT. Y1604 bears the Phosphotyrosine mark.

This sequence belongs to the protein kinase superfamily. Tyr protein kinase family. Insulin receptor subfamily. In terms of assembly, homodimer; homodimerizes following heparin- and ligand-binding. Interacts with CBL, IRS1, PIK3R1 and PLCG1. Interacts with FRS2 and SHC1. Interacts with PTN and MDK. Phosphorylated at tyrosine residues by autocatalysis, which activates kinase activity. In cells not stimulated by a ligand, receptor protein tyrosine phosphatase beta and zeta complex (PTPRB/PTPRZ1) dephosphorylates ALK at the sites in ALK that are undergoing autophosphorylation through autoactivation. Phosphorylation at Tyr-1507 is critical for SHC1 association. In terms of processing, N-glycosylated. In terms of tissue distribution, expressed in brain and CNS. Also expressed in the small intestine and testis, but not in normal lymphoid cells.

The protein localises to the cell membrane. The catalysed reaction is L-tyrosyl-[protein] + ATP = O-phospho-L-tyrosyl-[protein] + ADP + H(+). Activated upon ALKAL2 ligand-binding. ALKAL2-driven activation is coupled with heparin-binding. Following ligand-binding, homodimerizes and autophosphorylates, activating its kinase activity. Inactivated through dephosphorylation by receptor protein tyrosine phosphatase beta and zeta complex (PTPRB/PTPRZ1) when there is no stimulation by a ligand. Staurosporine, crizotinib and CH5424802 act as inhibitors of ALK kinase activity. Its function is as follows. Neuronal receptor tyrosine kinase that is essentially and transiently expressed in specific regions of the central and peripheral nervous systems and plays an important role in the genesis and differentiation of the nervous system. Also acts as a key thinness protein involved in the resistance to weight gain: in hypothalamic neurons, controls energy expenditure acting as a negative regulator of white adipose tissue lipolysis and sympathetic tone to fine-tune energy homeostasis. Following activation by ALKAL2 ligand at the cell surface, transduces an extracellular signal into an intracellular response. In contrast, ALKAL1 is not a potent physiological ligand for ALK. Ligand-binding to the extracellular domain induces tyrosine kinase activation, leading to activation of the mitogen-activated protein kinase (MAPK) pathway. Phosphorylates almost exclusively at the first tyrosine of the Y-x-x-x-Y-Y motif. Induces tyrosine phosphorylation of CBL, FRS2, IRS1 and SHC1, as well as of the MAP kinases MAPK1/ERK2 and MAPK3/ERK1. ALK activation may also be regulated by pleiotrophin (PTN) and midkine (MDK). PTN-binding induces MAPK pathway activation, which is important for the anti-apoptotic signaling of PTN and regulation of cell proliferation. MDK-binding induces phosphorylation of the ALK target insulin receptor substrate (IRS1), activates mitogen-activated protein kinases (MAPKs) and PI3-kinase, resulting also in cell proliferation induction. Drives NF-kappa-B activation, probably through IRS1 and the activation of the AKT serine/threonine kinase. Recruitment of IRS1 to activated ALK and the activation of NF-kappa-B are essential for the autocrine growth and survival signaling of MDK. This is ALK tyrosine kinase receptor from Homo sapiens (Human).